Consider the following 284-residue polypeptide: NAD kinase (284 aa).

D67 functions as the Proton acceptor in the catalytic mechanism. NAD(+) contacts are provided by residues 67–68 (DG), 141–142 (ND), R152, K169, D171, 182–187 (TGYSLS), and Q241.

This sequence belongs to the NAD kinase family. A divalent metal cation serves as cofactor.

It is found in the cytoplasm. It carries out the reaction NAD(+) + ATP = ADP + NADP(+) + H(+). Functionally, involved in the regulation of the intracellular balance of NAD and NADP, and is a key enzyme in the biosynthesis of NADP. Catalyzes specifically the phosphorylation on 2'-hydroxyl of the adenosine moiety of NAD to yield NADP. The chain is NAD kinase from Geobacter sulfurreducens (strain ATCC 51573 / DSM 12127 / PCA).